Reading from the N-terminus, the 129-residue chain is Glycine cleavage system H protein (129 aa).

In terms of domain architecture, Lipoyl-binding spans 24–106 (TYTVGITEHA…YAGGWIFKIK (83 aa)). Lysine 65 carries the N6-lipoyllysine modification.

It belongs to the GcvH family. As to quaternary structure, the glycine cleavage system is composed of four proteins: P, T, L and H. It depends on (R)-lipoate as a cofactor.

The glycine cleavage system catalyzes the degradation of glycine. The H protein shuttles the methylamine group of glycine from the P protein to the T protein. In Escherichia coli O139:H28 (strain E24377A / ETEC), this protein is Glycine cleavage system H protein.